The following is a 184-amino-acid chain: Probable chorismate pyruvate-lyase 1 (184 aa).

The substrate site is built by Arg70, Leu108, and Glu166.

The protein belongs to the UbiC family.

It localises to the cytoplasm. The enzyme catalyses chorismate = 4-hydroxybenzoate + pyruvate. Its pathway is cofactor biosynthesis; ubiquinone biosynthesis. Its function is as follows. Removes the pyruvyl group from chorismate, with concomitant aromatization of the ring, to provide 4-hydroxybenzoate (4HB) for the ubiquinone pathway. The sequence is that of Probable chorismate pyruvate-lyase 1 from Burkholderia pseudomallei (strain 1710b).